We begin with the raw amino-acid sequence, 100 residues long: Urease subunit gamma (100 aa).

The protein belongs to the urease gamma subunit family. Heterotrimer of UreA (gamma), UreB (beta) and UreC (alpha) subunits. Three heterotrimers associate to form the active enzyme.

Its subcellular location is the cytoplasm. The enzyme catalyses urea + 2 H2O + H(+) = hydrogencarbonate + 2 NH4(+). It participates in nitrogen metabolism; urea degradation; CO(2) and NH(3) from urea (urease route): step 1/1. In Paenarthrobacter aurescens (strain TC1), this protein is Urease subunit gamma.